The chain runs to 585 residues: Polyadenylate-binding protein, cytoplasmic and nuclear (585 aa).

Residues 14-37 (QLKIEEQTAPTTTESETPKVETSG) form a disordered region. RRM domains follow at residues 38–116 (ASLY…WSQR), 126–203 (GNIY…LHVS), 219–296 (TNVY…RAQK), and 322–399 (VNLF…IAQR). Residues 488–567 (GQFPRNGQQQ…AHAAYQKFKE (80 aa)) form the PABC domain.

This sequence belongs to the polyadenylate-binding protein type-1 family.

It localises to the cytoplasm. The protein resides in the nucleus. Functionally, binds the poly(A) tail of mRNA. Appears to be an important mediator of the multiple roles of the poly(A) tail in mRNA biogenesis, stability and translation. In the nucleus, involved in both mRNA cleavage and polyadenylation. Is also required for efficient mRNA export to the cytoplasm. Acts in concert with a poly(A)-specific nuclease (PAN) to affect poly(A) tail shortening, which may occur concomitantly with either nucleocytoplasmic mRNA transport or translational initiation. In the cytoplasm, stimulates translation initiation and regulates mRNA decay through translation termination-coupled poly(A) shortening, probably mediated by PAN. In Eremothecium gossypii (strain ATCC 10895 / CBS 109.51 / FGSC 9923 / NRRL Y-1056) (Yeast), this protein is Polyadenylate-binding protein, cytoplasmic and nuclear (PAB1).